The chain runs to 303 residues: Methionyl-tRNA formyltransferase (303 aa).

111 to 114 (SLLP) lines the (6S)-5,6,7,8-tetrahydrofolate pocket.

Belongs to the Fmt family.

The catalysed reaction is L-methionyl-tRNA(fMet) + (6R)-10-formyltetrahydrofolate = N-formyl-L-methionyl-tRNA(fMet) + (6S)-5,6,7,8-tetrahydrofolate + H(+). In terms of biological role, attaches a formyl group to the free amino group of methionyl-tRNA(fMet). The formyl group appears to play a dual role in the initiator identity of N-formylmethionyl-tRNA by promoting its recognition by IF2 and preventing the misappropriation of this tRNA by the elongation apparatus. In Ehrlichia chaffeensis (strain ATCC CRL-10679 / Arkansas), this protein is Methionyl-tRNA formyltransferase.